We begin with the raw amino-acid sequence, 116 residues long: Ribosome-binding factor A (116 aa).

The protein belongs to the RbfA family. As to quaternary structure, monomer. Binds 30S ribosomal subunits, but not 50S ribosomal subunits or 70S ribosomes.

It localises to the cytoplasm. Functionally, one of several proteins that assist in the late maturation steps of the functional core of the 30S ribosomal subunit. Associates with free 30S ribosomal subunits (but not with 30S subunits that are part of 70S ribosomes or polysomes). Required for efficient processing of 16S rRNA. May interact with the 5'-terminal helix region of 16S rRNA. This is Ribosome-binding factor A from Streptococcus mutans serotype c (strain ATCC 700610 / UA159).